A 622-amino-acid chain; its full sequence is MPASNDPVAASRRCETVSADVAIIGAGPVGLMIANYLGLQGVRVVVLEKLEQIIDYPRAIGLDDEALRVFQSVGLADVLLPHTTPDHWMRFVTHTGHCFASIEPRTDEFGWSRRNAFIQPLADRVLYEGLRRFPHVQVLFGTSVSGFTQDPAGVTIEADDEKGGRRTVRASYMVGADGGNSFVRRLLDVPFEGRTKPNQWIVVDVRNDPIGSPHIYMHCDPQRPYVSAALPHGIRRFEFMVMPGETEEELSKPENMAALIRKVVADPQKVDYIRKRVYTHNARLASTFRVDRVLLAGDAAHIMPVWQGQGYNSGIRDASNLGWKLAMVVKQLAGDALLDTYTAERRAHARSMIHLSEVAGDIFAPTSRFGIKFRDAFVRTFNVVPAMKRYFVEMRFKPMPRYETGVVLLAERKRKHGVMARVLERSGHSAPGRLLGLMSEKRESLLGRLVYGRDPSCHSPVGRMFIQPRVRTAEGSVVRLDDVLGSRFAIIGWGSDPTFGLSPLARETWQRLGGCFVLAKPDNQLDFHDDVPAGVIAIGDVQGRLKEWFARVPESVVLLRPDRFVAGMCTPQQVSDCIGELALKLSLKPAEQPAVKLAVPERAVAPESVAGVAAVAAVATRA.

FAD is bound by residues 20–49 (DVAI…VLEK) and 288–298 (FRVDRVLLAGD).

It belongs to the PheA/TfdB FAD monooxygenase family. FAD is required as a cofactor.

It catalyses the reaction 3-(3-hydroxyphenyl)propanoate + NADH + O2 + H(+) = 3-(2,3-dihydroxyphenyl)propanoate + NAD(+) + H2O. The enzyme catalyses (2E)-3-(3-hydroxyphenyl)prop-2-enoate + NADH + O2 + H(+) = (2E)-3-(2,3-dihydroxyphenyl)prop-2-enoate + NAD(+) + H2O. It participates in aromatic compound metabolism; 3-phenylpropanoate degradation. Its function is as follows. Catalyzes the insertion of one atom of molecular oxygen into position 2 of the phenyl ring of 3-(3-hydroxyphenyl)propionate (3-HPP) and hydroxycinnamic acid (3HCI). The polypeptide is 3-(3-hydroxy-phenyl)propionate/3-hydroxycinnamic acid hydroxylase (Paraburkholderia xenovorans (strain LB400)).